The chain runs to 288 residues: Ice-binding protein (288 aa).

Positions 1–22 are cleaved as a signal peptide; it reads MFSTTLINTFSLGLLAVVSVVA. 2 consecutive short sequence motifs (ice-binding site motif (T-A/G-X-T/N)) follow at residues 75 to 78 and 154 to 157; these read TAGN and TAFN. Asn-194 is a glycosylation site (N-linked (GlcNAc...) asparagine). Short sequence motifs (ice-binding site motif (T-A/G-X-T/N)) lie at residues 196-199 and 265-268; these read TGVT and TGAT.

The protein belongs to the ice-binding protein family.

The protein localises to the secreted. In terms of biological role, binds ice crystals and most probably inhibits their growth in order to prevent cell damage from extracellular ice. The chain is Ice-binding protein from Lentinula edodes (Shiitake mushroom).